The following is a 144-amino-acid chain: 3-hydroxyacyl-[acyl-carrier-protein] dehydratase FabZ (144 aa).

H51 is a catalytic residue.

Belongs to the thioester dehydratase family. FabZ subfamily.

It is found in the cytoplasm. It catalyses the reaction a (3R)-hydroxyacyl-[ACP] = a (2E)-enoyl-[ACP] + H2O. Its function is as follows. Involved in unsaturated fatty acids biosynthesis. Catalyzes the dehydration of short chain beta-hydroxyacyl-ACPs and long chain saturated and unsaturated beta-hydroxyacyl-ACPs. This Lactococcus lactis subsp. lactis (strain IL1403) (Streptococcus lactis) protein is 3-hydroxyacyl-[acyl-carrier-protein] dehydratase FabZ (fabZ2).